The following is a 124-amino-acid chain: MPTINQLVRKERKKIIEKSKSPALKNCPQRRGVCTRVYTTTPKKPNSALRKVAKVRLTSGFEVISYIGGEGHNLQEHSIVLVRGGRVKDLPGVKYHIVRGALDTAGVAKRTVSRSKYGAKRPKK.

Residue D89 is modified to 3-methylthioaspartic acid.

It belongs to the universal ribosomal protein uS12 family. As to quaternary structure, part of the 30S ribosomal subunit. Contacts proteins S8 and S17. May interact with IF1 in the 30S initiation complex.

In terms of biological role, with S4 and S5 plays an important role in translational accuracy. Functionally, interacts with and stabilizes bases of the 16S rRNA that are involved in tRNA selection in the A site and with the mRNA backbone. Located at the interface of the 30S and 50S subunits, it traverses the body of the 30S subunit contacting proteins on the other side and probably holding the rRNA structure together. The combined cluster of proteins S8, S12 and S17 appears to hold together the shoulder and platform of the 30S subunit. In Campylobacter hominis (strain ATCC BAA-381 / DSM 21671 / CCUG 45161 / LMG 19568 / NCTC 13146 / CH001A), this protein is Small ribosomal subunit protein uS12.